We begin with the raw amino-acid sequence, 145 residues long: D-aminoacyl-tRNA deacylase (145 aa).

Positions 137-138 (GP) match the Gly-cisPro motif, important for rejection of L-amino acids motif.

Belongs to the DTD family. Homodimer.

It localises to the cytoplasm. The catalysed reaction is glycyl-tRNA(Ala) + H2O = tRNA(Ala) + glycine + H(+). It carries out the reaction a D-aminoacyl-tRNA + H2O = a tRNA + a D-alpha-amino acid + H(+). Functionally, an aminoacyl-tRNA editing enzyme that deacylates mischarged D-aminoacyl-tRNAs. Also deacylates mischarged glycyl-tRNA(Ala), protecting cells against glycine mischarging by AlaRS. Acts via tRNA-based rather than protein-based catalysis; rejects L-amino acids rather than detecting D-amino acids in the active site. By recycling D-aminoacyl-tRNA to D-amino acids and free tRNA molecules, this enzyme counteracts the toxicity associated with the formation of D-aminoacyl-tRNA entities in vivo and helps enforce protein L-homochirality. This is D-aminoacyl-tRNA deacylase from Shewanella frigidimarina (strain NCIMB 400).